The sequence spans 347 residues: Methionine import ATP-binding protein MetN (347 aa).

Positions 2-241 constitute an ABC transporter domain; it reads IKLEGVSKTY…PATRLGRDFL (240 aa). 38–45 contributes to the ATP binding site; it reads GLSGAGKS.

It belongs to the ABC transporter superfamily. Methionine importer (TC 3.A.1.24) family. In terms of assembly, the complex is composed of two ATP-binding proteins (MetN), two transmembrane proteins (MetI) and a solute-binding protein (MetQ).

It is found in the cell inner membrane. It carries out the reaction L-methionine(out) + ATP + H2O = L-methionine(in) + ADP + phosphate + H(+). The enzyme catalyses D-methionine(out) + ATP + H2O = D-methionine(in) + ADP + phosphate + H(+). Part of the ABC transporter complex MetNIQ involved in methionine import. Responsible for energy coupling to the transport system. The protein is Methionine import ATP-binding protein MetN of Chromohalobacter salexigens (strain ATCC BAA-138 / DSM 3043 / CIP 106854 / NCIMB 13768 / 1H11).